The following is a 297-amino-acid chain: Alpha-tubulin N-acetyltransferase 1 (297 aa).

The 186-residue stretch at 1–186 (MEFDFDVHKI…NNFVVFDGFF (186 aa)) folds into the N-acetyltransferase domain. Acetyl-CoA contacts are provided by residues 120–133 (FYIH…GFGK) and 156–165 (SEKFLSFLRK). The segment at 269–297 (LHRTANSEQEDHSQRRRTSSLNRPQSIHH) is disordered. Residues 287–297 (SSLNRPQSIHH) show a composition bias toward polar residues.

The protein belongs to the acetyltransferase ATAT1 family.

The protein resides in the cytoplasm. Its subcellular location is the membrane. It is found in the clathrin-coated pit. The protein localises to the cell junction. It localises to the focal adhesion. The protein resides in the cell projection. Its subcellular location is the axon. It is found in the cytoskeleton. The protein localises to the spindle. The enzyme catalyses L-lysyl-[alpha-tubulin] + acetyl-CoA = N(6)-acetyl-L-lysyl-[alpha-tubulin] + CoA + H(+). Functionally, specifically acetylates 'Lys-40' in alpha-tubulin on the lumenal side of microtubules. Promotes microtubule destabilization and accelerates microtubule dynamics; this activity may be independent of acetylation activity. Acetylates alpha-tubulin with a slow enzymatic rate, due to a catalytic site that is not optimized for acetyl transfer. Enters the microtubule through each end and diffuses quickly throughout the lumen of microtubules. Acetylates only long/old microtubules because of its slow acetylation rate since it does not have time to act on dynamically unstable microtubules before the enzyme is released. May be involved in neuron development. The polypeptide is Alpha-tubulin N-acetyltransferase 1 (Xenopus tropicalis (Western clawed frog)).